Here is a 352-residue protein sequence, read N- to C-terminus: Phenylalanine--tRNA ligase alpha subunit (352 aa).

Glutamate 258 provides a ligand contact to Mg(2+).

It belongs to the class-II aminoacyl-tRNA synthetase family. Phe-tRNA synthetase alpha subunit type 1 subfamily. As to quaternary structure, tetramer of two alpha and two beta subunits. It depends on Mg(2+) as a cofactor.

Its subcellular location is the cytoplasm. The enzyme catalyses tRNA(Phe) + L-phenylalanine + ATP = L-phenylalanyl-tRNA(Phe) + AMP + diphosphate + H(+). The polypeptide is Phenylalanine--tRNA ligase alpha subunit (Staphylococcus aureus (strain bovine RF122 / ET3-1)).